We begin with the raw amino-acid sequence, 386 residues long: Acetate kinase (386 aa).

A Mg(2+)-binding site is contributed by Asn-7. Position 14 (Lys-14) interacts with ATP. Arg-78 is a binding site for substrate. The active-site Proton donor/acceptor is the Asp-135. Residues 195-199 (HLGNG), 268-270 (DMR), and 316-320 (GIGEN) contribute to the ATP site. A Mg(2+)-binding site is contributed by Glu-370.

The protein belongs to the acetokinase family. In terms of assembly, homodimer. Mg(2+) serves as cofactor. The cofactor is Mn(2+).

It localises to the cytoplasm. It carries out the reaction acetate + ATP = acetyl phosphate + ADP. Its pathway is metabolic intermediate biosynthesis; acetyl-CoA biosynthesis; acetyl-CoA from acetate: step 1/2. Functionally, catalyzes the formation of acetyl phosphate from acetate and ATP. Can also catalyze the reverse reaction. This chain is Acetate kinase, found in Pseudarthrobacter chlorophenolicus (strain ATCC 700700 / DSM 12829 / CIP 107037 / JCM 12360 / KCTC 9906 / NCIMB 13794 / A6) (Arthrobacter chlorophenolicus).